A 204-amino-acid polypeptide reads, in one-letter code: Transcriptional regulator GfcR (204 aa).

Belongs to the purine/pyrimidine phosphoribosyltransferase family. GfcR subfamily.

The protein is Transcriptional regulator GfcR of Methanoculleus marisnigri (strain ATCC 35101 / DSM 1498 / JR1).